Consider the following 586-residue polypeptide: Chaperone protein HscA homolog (586 aa).

This sequence belongs to the heat shock protein 70 family.

In terms of biological role, chaperone involved in the maturation of iron-sulfur cluster-containing proteins. Has a low intrinsic ATPase activity which is markedly stimulated by HscB. In Rickettsia typhi (strain ATCC VR-144 / Wilmington), this protein is Chaperone protein HscA homolog.